The chain runs to 156 residues: Aspercryptin biosynthesis cluster protein B (156 aa).

An N-terminal signal peptide occupies residues 1-39 (MRMANRIGAGRKSALQLSHLRTRLTSSAAAVATAPTLDP).

It belongs to the YciI family.

The protein operates within secondary metabolite biosynthesis. Part of the gene cluster that mediates the biosynthesis of aspercryptins, linear lipopeptides built from six amino acids including 2 highly unusual and nonproteogenic amino acids, 2-amino-octanoic acid (2aoa) and 2-amino-dodecanol (2adol). The core structure of aspercryptins is as follows: Ser/Ala-Thr-Ile/Val-2aoa-Aasn-2adol. The first step of aspercryptin biosynthesis is the generation of the fatty acid precursors, octanoic and dodecanoic acids, by the FAS subunits atnF and atnM. The fatty acid precursors are likely transformed into the corresponding alpha-amino fatty acids in three steps. First, they are hydroxylated by the cytochrome P450 monooxygenase atnE, then oxidized to the corresponding alpha-keto acids by the NAD(P)-dependent oxidoreductase atnD, and finally converted to the alpha-amino fatty acids by the PLP-dependent aminotransferases atnH or atnJ. the alpha-amino fatty acids, 2-amino-octanoic and 2-amino-dodecanoic acids, are recognized, activated, and covalently tethered to the NRPS atnA by its fourth and sixth adenylation domains. The second module of atnA is the Thr module and contains an epimerase (E) domain responsible for the epimerization of Thr to D-allo-Thr. Additionally, despite atnA having only one epimerase domain, the first amino acid of aspercryptin A1 is D-Ser, suggesting that serine is either loaded directly as D-Ser on the first module or that the epimerase domain in the threonine module epimerizes both L-Ser and L-Thr. After condensation of the hexapeptide of aspercryptin, the C-terminal reductase (TE) domain might be involved in the reductive release and production of the aldehyde hexapeptide. Further reduction would generate aspercryptins. The variety of aspercryptins produced reflects the flexibility of the atnA NRPS, allowing incorporation of alanine instead of serine, valine for isoleucine, and a C10 fatty amino alcohol instead of the C12 version. AtnB seems to be involved in the selectivity for Ile versus Val by the third module. Moreover, type B, C and D aspercryptins have an additional N-terminal cichorine, acetyl and propionyl group respectively. The chain is Aspercryptin biosynthesis cluster protein B from Emericella nidulans (strain FGSC A4 / ATCC 38163 / CBS 112.46 / NRRL 194 / M139) (Aspergillus nidulans).